A 136-amino-acid polypeptide reads, in one-letter code: Aspartate 1-decarboxylase (136 aa).

Residue Ser25 is the Schiff-base intermediate with substrate; via pyruvic acid of the active site. Ser25 is subject to Pyruvic acid (Ser). Thr57 serves as a coordination point for substrate. Residue Tyr58 is the Proton donor of the active site. 73 to 75 (GAA) provides a ligand contact to substrate.

It belongs to the PanD family. In terms of assembly, heterooctamer of four alpha and four beta subunits. Requires pyruvate as cofactor. In terms of processing, is synthesized initially as an inactive proenzyme, which is activated by self-cleavage at a specific serine bond to produce a beta-subunit with a hydroxyl group at its C-terminus and an alpha-subunit with a pyruvoyl group at its N-terminus.

The protein resides in the cytoplasm. It carries out the reaction L-aspartate + H(+) = beta-alanine + CO2. The protein operates within cofactor biosynthesis; (R)-pantothenate biosynthesis; beta-alanine from L-aspartate: step 1/1. Its function is as follows. Catalyzes the pyruvoyl-dependent decarboxylation of aspartate to produce beta-alanine. The chain is Aspartate 1-decarboxylase from Corynebacterium efficiens (strain DSM 44549 / YS-314 / AJ 12310 / JCM 11189 / NBRC 100395).